A 495-amino-acid polypeptide reads, in one-letter code: ATP synthase subunit beta (495 aa).

178–185 contacts ATP; sequence GGAGVGKT.

Belongs to the ATPase alpha/beta chains family. F-type ATPases have 2 components, CF(1) - the catalytic core - and CF(0) - the membrane proton channel. CF(1) has five subunits: alpha(3), beta(3), gamma(1), delta(1), epsilon(1). CF(0) has three main subunits: a(1), b(2) and c(9-12). The alpha and beta chains form an alternating ring which encloses part of the gamma chain. CF(1) is attached to CF(0) by a central stalk formed by the gamma and epsilon chains, while a peripheral stalk is formed by the delta and b chains.

The protein localises to the cell membrane. It carries out the reaction ATP + H2O + 4 H(+)(in) = ADP + phosphate + 5 H(+)(out). Its function is as follows. Produces ATP from ADP in the presence of a proton gradient across the membrane. The catalytic sites are hosted primarily by the beta subunits. This Bifidobacterium animalis subsp. lactis (strain AD011) protein is ATP synthase subunit beta.